The sequence spans 176 residues: Ribosome rescue factor SmrB (176 aa).

Residues leucine 93–aspartate 168 form the Smr domain.

Belongs to the SmrB family. Associates with collided ribosomes, but not with correctly translating polysomes.

Its function is as follows. Acts as a ribosome collision sensor. Detects stalled/collided disomes (pairs of ribosomes where the leading ribosome is stalled and a second ribosome has collided with it) and endonucleolytically cleaves mRNA at the 5' boundary of the stalled ribosome. Stalled/collided disomes form a new interface (primarily via the 30S subunits) that binds SmrB. Cleaved mRNA becomes available for tmRNA ligation, leading to ribosomal subunit dissociation and rescue of stalled ribosomes. The chain is Ribosome rescue factor SmrB from Shewanella sp. (strain MR-4).